Reading from the N-terminus, the 175-residue chain is Nucleoside triphosphate/diphosphate phosphatase (175 aa).

Residue R23 is the Proton donor of the active site. The Mg(2+) site is built by N87, D103, D105, D107, D120, and E123.

The protein belongs to the Ntdp family. Requires Mg(2+) as cofactor.

The enzyme catalyses a ribonucleoside 5'-triphosphate + H2O = a ribonucleoside 5'-diphosphate + phosphate + H(+). It carries out the reaction a ribonucleoside 5'-diphosphate + H2O = a ribonucleoside 5'-phosphate + phosphate + H(+). Functionally, has nucleoside phosphatase activity towards nucleoside triphosphates and nucleoside diphosphates. The chain is Nucleoside triphosphate/diphosphate phosphatase from Oceanobacillus iheyensis (strain DSM 14371 / CIP 107618 / JCM 11309 / KCTC 3954 / HTE831).